Reading from the N-terminus, the 279-residue chain is Pleckstrin homology domain-containing family F member 1 (279 aa).

The region spanning 35 to 131 (VLLGEGVLTK…WISHIEECVR (97 aa)) is the PH domain. The segment at 152–212 (DKATDICMRC…VCSLCYRELA (61 aa)) adopts an FYVE-type zinc-finger fold. Zn(2+)-binding residues include Cys158, Cys161, Cys175, Cys178, Cys183, Cys186, Cys204, and Cys207. A disordered region spans residues 218–264 (EEAEEQGAGSPGQPAHLARPICGASSGDDDDSDEDKEGSRDGDWPSS). Positions 244 to 253 (GDDDDSDEDK) are enriched in acidic residues.

As to expression, highly expressed in heart and skeletal muscle. Weakly expressed in brain, thymus, spleen, kidney, liver, small intestine, placenta and lung.

It is found in the nucleus. Its subcellular location is the cytoplasm. The protein resides in the perinuclear region. The protein localises to the lysosome. Functionally, may induce apoptosis through the lysosomal-mitochondrial pathway. Translocates to the lysosome initiating the permeabilization of lysosomal membrane (LMP) and resulting in the release of CTSD and CTSL to the cytoplasm. Triggers the caspase-independent apoptosis by altering mitochondrial membrane permeabilization (MMP) resulting in the release of PDCD8. The chain is Pleckstrin homology domain-containing family F member 1 (PLEKHF1) from Homo sapiens (Human).